The following is a 527-amino-acid chain: ATP-dependent RNA helicase DBP3 (527 aa).

Basic residues predominate over residues 1–11; that stretch reads MSKDHKDKKRK. Residues 1 to 89 are disordered; it reads MSKDHKDKKR…TGYSQSPALT (89 aa). Residues 12–24 show a composition bias toward basic and acidic residues; the sequence is HSDEATEEVEKKT. Positions 25–44 are enriched in basic residues; sequence KVSKKEKKDKKEKKEKKDKK. The segment covering 45-71 has biased composition (basic and acidic residues); it reads EKKDKSEKKDKSEKKEKKEKKESEDVP. A compositionally biased stretch (polar residues) spans 72–89; the sequence is TKSSAVVSTGYSQSPALT. The Q motif motif lies at 119-145; it reads LGFDQIDLDSRIASVISKFPTPTPIQA. One can recognise a Helicase ATP-binding domain in the interval 148–319; it reads WPYLLSGKDV…STFMNSPVKV (172 aa). 161-168 lines the ATP pocket; sequence AETGSGKT. The short motif at 266-269 is the DEAD box element; the sequence is DEAD. A Helicase C-terminal domain is found at 348–497; that stretch reads KLLSLLRKYQ…PVPDELLKFG (150 aa).

The protein belongs to the DEAD box helicase family. DDX5/DBP2 subfamily.

The protein resides in the nucleus. The protein localises to the nucleolus. It carries out the reaction ATP + H2O = ADP + phosphate + H(+). ATP-dependent RNA helicase required for 60S ribosomal subunit synthesis. Involved in efficient pre-rRNA processing, predominantly at site A3, which is necessary for the normal formation of 25S and 5.8S rRNAs. This chain is ATP-dependent RNA helicase DBP3 (DBP3), found in Debaryomyces hansenii (strain ATCC 36239 / CBS 767 / BCRC 21394 / JCM 1990 / NBRC 0083 / IGC 2968) (Yeast).